The following is a 3901-amino-acid chain: Nonribosomal peptide synthetase opaA (3901 aa).

The adenylation 1 stretch occupies residues 248–641 (HNAQHHPSVV…HRKDNQIKIR (394 aa)). The Carrier 1 domain maps to 780 to 854 (LPVTANEIVV…DMATRLTRIK (75 aa)). Ser-815 is modified (O-(pantetheine 4'-phosphoryl)serine). Residues 891 to 1164 (DAYPCSALQE…IATVPIRINL (274 aa)) form a condensation 1 region. The segment at 1328 to 1725 (QSHAQKTPKS…GRIGNQVKLR (398 aa)) is adenylation 2. The Carrier 2 domain maps to 1858-1936 (RTPLDTERDL…QIAAQAATRA (79 aa)). Position 1895 is an O-(pantetheine 4'-phosphoryl)serine (Ser-1895). The interval 1953–2261 (KLTPIQQLFF…KDARRRLTRN (309 aa)) is epimerase. The interval 2403–2826 (ENLYPCAPIQ…LVSTDHKRLL (424 aa)) is condensation 2. The interval 2846–3243 (QQHVRETPDA…GRKDSQIKIR (398 aa)) is adenylation 3. One can recognise a Carrier 3 domain in the interval 3375–3451 (LPSTAGEQLL…ALAARSRSKD (77 aa)). O-(pantetheine 4'-phosphoryl)serine is present on Ser-3412. The interval 3509-3837 (HHFSFAVEGK…EDLKTHFTLN (329 aa)) is condensation 3.

This sequence belongs to the NRP synthetase family.

Functionally, nonribosomal peptide synthetase; part of the gene cluster that mediates the biosynthesis of oxepinamides, derivatives of anthranilyl-containing tripeptides that share an oxepin ring and a fused pyrimidinone moiety. The nonribosomal peptide synthetase (NRPS) opaA assembles the quinazolinone core with D-Phe incorporation. The first adenylation domain (A1) of opaA loads and activates anthranilic acid whereas the second A domain (A2) is for activating of L-Phe, which is then converted to D-form by the E domain. The third A domain (A3) is responsible for L-Ile activation and the terminal condensation domain C3 for cyclization and releasing the NRPS product protuboxepin K. The cytochrome P450 monooxygenase opaB then catalyzes alone the oxepin ring formation to convert protuboxepin K into protuboxepin A. The flavoenzyme opaC installs subsequently one hydroxyl group at the oxepin ring, accompanied by double bond migration, to form 15-epi-oxepinamide E. The epimerase opaE changes the D-Phe residue back to L-form, leading to oxepinamide E, which is further methylated at the hydroxyl group at C-12 by the O-methyltransferase OpaF to yield oxepinamide F. In Aspergillus ustus, this protein is Nonribosomal peptide synthetase opaA.